Consider the following 1032-residue polypeptide: Chitin synthase 8 (1032 aa).

Pro residues-rich tracts occupy residues 1–11 (MRPGDIYPPPQ) and 26–41 (PPQP…PPQQ). The segment at 1–220 (MRPGDIYPPP…DDDMNDSHPL (220 aa)) is disordered. Polar residues-rich tracts occupy residues 65–78 (MSPT…SRYN), 98–107 (LPTQSLSPFN), and 143–160 (TNPS…SYSY). The N-linked (GlcNAc...) asparagine glycan is linked to N78. Low complexity predominate over residues 176–188 (PHHSSQSSVSSIP). N-linked (GlcNAc...) asparagine glycans are attached at residues N215, N304, N473, N545, and N691. Helical transmembrane passes span 728–748 (TLNM…FFVL), 762–782 (VNIP…LLSL), 796–816 (SMVG…FLAV), 842–862 (IVIS…MALE), 870–890 (FFQY…YAFC), 972–992 (VLLV…QASG), and 995–1015 (NSLA…LAFF).

The protein belongs to the chitin synthase family.

It localises to the cell membrane. It catalyses the reaction [(1-&gt;4)-N-acetyl-beta-D-glucosaminyl](n) + UDP-N-acetyl-alpha-D-glucosamine = [(1-&gt;4)-N-acetyl-beta-D-glucosaminyl](n+1) + UDP + H(+). Polymerizes chitin, a structural polymer of the cell wall and septum, by transferring the sugar moiety of UDP-GlcNAc to the non-reducing end of the growing chitin polymer. This chain is Chitin synthase 8, found in Cryptococcus neoformans var. grubii serotype A (strain H99 / ATCC 208821 / CBS 10515 / FGSC 9487) (Filobasidiella neoformans var. grubii).